Reading from the N-terminus, the 993-residue chain is Chromosome transmission fidelity protein 18 homolog (993 aa).

Residues 26-72 (PDEFNAYDGPSTSKQAAEKQKENRAPVAALRDSTRLGNSTLGSPQLS) form a disordered region. Residues 60-72 (RLGNSTLGSPQLS) are compositionally biased toward polar residues. 427–434 (GPPGLGKT) lines the ATP pocket. The tract at residues 892 to 913 (AAPKGGAPSAPAAKKKTSGAAA) is disordered. A compositionally biased stretch (low complexity) spans 894–913 (PKGGAPSAPAAKKKTSGAAA).

It belongs to the activator 1 small subunits family. CTF18 subfamily. Component of the CTF18-RFC complex.

It localises to the nucleus. In terms of biological role, chromosome cohesion factor involved in sister chromatid cohesion and fidelity of chromosome transmission. Component of one of the cell nuclear antigen loader complexes, CTF18-replication factor C (CTF18-RFC). The CTF18-RFC complex catalyzes the ATP-dependent loading of PCNA onto primed and gapped DNA and has weak ATPase activity. The CTF18-RFC complex catalyzes the ATP-dependent loading of PCNA onto primed and gapped DNA. The chain is Chromosome transmission fidelity protein 18 homolog from Drosophila melanogaster (Fruit fly).